Consider the following 359-residue polypeptide: Transcription factor bHLH130 (359 aa).

Residue serine 60 is modified to Phosphoserine. Positions 161-186 (EEDEESPSNSNGLRRHCSLSSRPPSS) are disordered. A compositionally biased stretch (polar residues) spans 167-184 (PSNSNGLRRHCSLSSRPP). The region spanning 285 to 335 (CATHPRSIAERVRRTRISERMRKLQELVPNMDKQTNTSDMLDLAVDYIKDL) is the bHLH domain.

In terms of assembly, homodimer.

It is found in the nucleus. The protein is Transcription factor bHLH130 (BHLH130) of Arabidopsis thaliana (Mouse-ear cress).